Here is a 164-residue protein sequence, read N- to C-terminus: Thiol peroxidase (164 aa).

One can recognise a Thioredoxin domain in the interval 16–162 (LQVGDIAKDF…YEAAINAAKI (147 aa)). Cys-58 (cysteine sulfenic acid (-SOH) intermediate) is an active-site residue. Cysteines 58 and 92 form a disulfide.

Belongs to the peroxiredoxin family. Tpx subfamily. As to quaternary structure, homodimer.

It catalyses the reaction a hydroperoxide + [thioredoxin]-dithiol = an alcohol + [thioredoxin]-disulfide + H2O. Thiol-specific peroxidase that catalyzes the reduction of hydrogen peroxide and organic hydroperoxides to water and alcohols, respectively. Plays a role in cell protection against oxidative stress by detoxifying peroxides. The sequence is that of Thiol peroxidase from Streptococcus agalactiae serotype III (strain NEM316).